The chain runs to 196 residues: Lipoprotein signal peptidase (196 aa).

The next 3 helical transmembrane spans lie at 43-63, 75-95, and 97-117; these read LMLKVTSILNMVYTWNYGISF, AIFLITNMIIVCYLYHLMICS, and TIGSFVGYNFVIGGAIGNLID. Active-site residues include D126 and D144. The chain crosses the membrane as a helical span at residues 135 to 155; the sequence is YSFPVFNLADCFITLGVIILI.

The protein belongs to the peptidase A8 family.

It is found in the cell inner membrane. It catalyses the reaction Release of signal peptides from bacterial membrane prolipoproteins. Hydrolyzes -Xaa-Yaa-Zaa-|-(S,diacylglyceryl)Cys-, in which Xaa is hydrophobic (preferably Leu), and Yaa (Ala or Ser) and Zaa (Gly or Ala) have small, neutral side chains.. It participates in protein modification; lipoprotein biosynthesis (signal peptide cleavage). In terms of biological role, this protein specifically catalyzes the removal of signal peptides from prolipoproteins. The chain is Lipoprotein signal peptidase from Rickettsia typhi (strain ATCC VR-144 / Wilmington).